Consider the following 115-residue polypeptide: NADH-ubiquinone oxidoreductase chain 3 (115 aa).

A run of 3 helical transmembrane segments spans residues leucine 3–leucine 23, phenylalanine 55–leucine 75, and threonine 87–leucine 107.

The protein belongs to the complex I subunit 3 family.

It is found in the mitochondrion membrane. It catalyses the reaction a ubiquinone + NADH + 5 H(+)(in) = a ubiquinol + NAD(+) + 4 H(+)(out). In terms of biological role, core subunit of the mitochondrial membrane respiratory chain NADH dehydrogenase (Complex I) that is believed to belong to the minimal assembly required for catalysis. Complex I functions in the transfer of electrons from NADH to the respiratory chain. The immediate electron acceptor for the enzyme is believed to be ubiquinone. This is NADH-ubiquinone oxidoreductase chain 3 (MT-ND3) from Alligator mississippiensis (American alligator).